A 104-amino-acid chain; its full sequence is Large ribosomal subunit protein bL21 (104 aa).

Belongs to the bacterial ribosomal protein bL21 family. As to quaternary structure, part of the 50S ribosomal subunit. Contacts protein L20.

Functionally, this protein binds to 23S rRNA in the presence of protein L20. The chain is Large ribosomal subunit protein bL21 from Caldanaerobacter subterraneus subsp. tengcongensis (strain DSM 15242 / JCM 11007 / NBRC 100824 / MB4) (Thermoanaerobacter tengcongensis).